Here is a 479-residue protein sequence, read N- to C-terminus: Zinc finger and SCAN domain-containing protein 26 (479 aa).

A Glycyl lysine isopeptide (Lys-Gly) (interchain with G-Cter in SUMO2) cross-link involves residue K17. The 83-residue stretch at 51–133 folds into the SCAN box domain; that stretch reads CKRFRQLRYE…VFLEDLQLEL (83 aa). Positions 155-187 are disordered; that stretch reads TAPGKATPERQVQPEGDVPQPEREKGEAKRIEN. Residues 174 to 187 are compositionally biased toward basic and acidic residues; sequence QPEREKGEAKRIEN. Residues 232–254 form a C2H2-type 1; degenerate zinc finger; the sequence is CKCSEYGQAFFQHSDLIKHESSH. 7 C2H2-type zinc fingers span residues 283–305, 311–333, 339–361, 367–389, 395–417, 423–445, and 451–473; these read HQCH…QKIH, YQCK…LRIH, YLCI…QRIH, CQCK…QRIH, HQCN…HRIH, FKCT…VRIH, and YKCN…QRYH.

The protein localises to the nucleus. Functionally, may be involved in transcriptional regulation. In Bos taurus (Bovine), this protein is Zinc finger and SCAN domain-containing protein 26 (ZSCAN26).